The chain runs to 227 residues: Lipoprotein-releasing system ATP-binding protein LolD (227 aa).

Residues 7 to 227 (LKLTGVERHY…TISDGKVVEF (221 aa)) enclose the ABC transporter domain. 43–50 (APSGTGKS) is a binding site for ATP.

This sequence belongs to the ABC transporter superfamily. Lipoprotein translocase (TC 3.A.1.125) family. The complex is composed of two ATP-binding proteins (LolD) and two transmembrane proteins (LolC and LolE).

It is found in the cell inner membrane. Functionally, part of the ABC transporter complex LolCDE involved in the translocation of mature outer membrane-directed lipoproteins, from the inner membrane to the periplasmic chaperone, LolA. Responsible for the formation of the LolA-lipoprotein complex in an ATP-dependent manner. This is Lipoprotein-releasing system ATP-binding protein LolD from Rhizobium etli (strain ATCC 51251 / DSM 11541 / JCM 21823 / NBRC 15573 / CFN 42).